Reading from the N-terminus, the 271-residue chain is Formamidopyrimidine-DNA glycosylase (271 aa).

Proline 2 functions as the Schiff-base intermediate with DNA in the catalytic mechanism. Residue glutamate 3 is the Proton donor of the active site. Lysine 58 acts as the Proton donor; for beta-elimination activity in catalysis. Histidine 91, arginine 110, and arginine 152 together coordinate DNA. The segment at 237-271 (QIYGRSAHPCPICGTPIRLERIGQRASYYCTQCQH) adopts an FPG-type zinc-finger fold. The active-site Proton donor; for delta-elimination activity is the arginine 261.

Belongs to the FPG family. In terms of assembly, monomer. It depends on Zn(2+) as a cofactor.

It catalyses the reaction Hydrolysis of DNA containing ring-opened 7-methylguanine residues, releasing 2,6-diamino-4-hydroxy-5-(N-methyl)formamidopyrimidine.. It carries out the reaction 2'-deoxyribonucleotide-(2'-deoxyribose 5'-phosphate)-2'-deoxyribonucleotide-DNA = a 3'-end 2'-deoxyribonucleotide-(2,3-dehydro-2,3-deoxyribose 5'-phosphate)-DNA + a 5'-end 5'-phospho-2'-deoxyribonucleoside-DNA + H(+). Functionally, involved in base excision repair of DNA damaged by oxidation or by mutagenic agents. Acts as a DNA glycosylase that recognizes and removes damaged bases. Has a preference for oxidized purines, such as 7,8-dihydro-8-oxoguanine (8-oxoG). Has AP (apurinic/apyrimidinic) lyase activity and introduces nicks in the DNA strand. Cleaves the DNA backbone by beta-delta elimination to generate a single-strand break at the site of the removed base with both 3'- and 5'-phosphates. In Nitrosococcus oceani (strain ATCC 19707 / BCRC 17464 / JCM 30415 / NCIMB 11848 / C-107), this protein is Formamidopyrimidine-DNA glycosylase.